Consider the following 515-residue polypeptide: Peroxisomal catalase A (515 aa).

Residue Ser-2 is modified to N-acetylserine. Active-site residues include His-70 and Asn-143. Residue Tyr-355 coordinates heme. Residues 513 to 515 (SKF) carry the Microbody targeting signal motif.

Belongs to the catalase family. As to quaternary structure, homotetramer. Heme is required as a cofactor.

Its subcellular location is the peroxisome matrix. It catalyses the reaction 2 H2O2 = O2 + 2 H2O. Catalyzes the degradation of hydrogen peroxide (H(2)O(2)) generated by peroxisomal oxidases to water and oxygen, thereby protecting cells from the toxic effects of hydrogen peroxide. This Saccharomyces cerevisiae (strain ATCC 204508 / S288c) (Baker's yeast) protein is Peroxisomal catalase A (CTA1).